The chain runs to 249 residues: Dof zinc finger protein DOF4.5 (249 aa).

The Dof-type zinc finger occupies 25–79 (RVCARCDSDNTKFCYYNNYCEFQPRYFCKNCRRYWTHGGALRNIPIGGSSRAKRA). Zn(2+) is bound by residues Cys-27, Cys-30, Cys-52, and Cys-55.

It localises to the nucleus. In terms of biological role, transcription factor that binds specifically to a 5'-AA[AG]G-3' consensus core sequence. The chain is Dof zinc finger protein DOF4.5 (DOF4.5) from Arabidopsis thaliana (Mouse-ear cress).